We begin with the raw amino-acid sequence, 87 residues long: Retinal rod rhodopsin-sensitive cGMP 3',5'-cyclic phosphodiesterase subunit gamma (87 aa).

M1 carries the N-acetylmethionine modification. A compositionally biased stretch (basic and acidic residues) spans 1–12 (MNLEPPKAEIRS). Residues 1–55 (MNLEPPKAEIRSATRVIGGPVTPRKGPPKFKQRQTRQFKSKPPKKGVQGFGDDIP) form a disordered region. Over residues 26–44 (GPPKFKQRQTRQFKSKPPK) the composition is skewed to basic residues.

It belongs to the rod/cone cGMP-PDE gamma subunit family. In terms of assembly, oligomer composed of two catalytic chains (alpha and beta), an inhibitory chain (gamma) and the delta chain.

The enzyme catalyses 3',5'-cyclic GMP + H2O = GMP + H(+). In terms of biological role, participates in processes of transmission and amplification of the visual signal. cGMP-PDEs are the effector molecules in G-protein-mediated phototransduction in vertebrate rods and cones. In Canis lupus familiaris (Dog), this protein is Retinal rod rhodopsin-sensitive cGMP 3',5'-cyclic phosphodiesterase subunit gamma (PDE6G).